The following is a 617-amino-acid chain: Dihydroxy-acid dehydratase (617 aa).

Asp82 contacts Mg(2+). Cys123 is a binding site for [2Fe-2S] cluster. Mg(2+) contacts are provided by Asp124 and Lys125. An N6-carboxylysine modification is found at Lys125. A [2Fe-2S] cluster-binding site is contributed by Cys197. Glu497 contributes to the Mg(2+) binding site. Ser523 serves as the catalytic Proton acceptor.

It belongs to the IlvD/Edd family. In terms of assembly, homodimer. The cofactor is [2Fe-2S] cluster. Mg(2+) serves as cofactor.

It catalyses the reaction (2R)-2,3-dihydroxy-3-methylbutanoate = 3-methyl-2-oxobutanoate + H2O. The enzyme catalyses (2R,3R)-2,3-dihydroxy-3-methylpentanoate = (S)-3-methyl-2-oxopentanoate + H2O. It functions in the pathway amino-acid biosynthesis; L-isoleucine biosynthesis; L-isoleucine from 2-oxobutanoate: step 3/4. It participates in amino-acid biosynthesis; L-valine biosynthesis; L-valine from pyruvate: step 3/4. Functions in the biosynthesis of branched-chain amino acids. Catalyzes the dehydration of (2R,3R)-2,3-dihydroxy-3-methylpentanoate (2,3-dihydroxy-3-methylvalerate) into 2-oxo-3-methylpentanoate (2-oxo-3-methylvalerate) and of (2R)-2,3-dihydroxy-3-methylbutanoate (2,3-dihydroxyisovalerate) into 2-oxo-3-methylbutanoate (2-oxoisovalerate), the penultimate precursor to L-isoleucine and L-valine, respectively. This Streptomyces coelicolor (strain ATCC BAA-471 / A3(2) / M145) protein is Dihydroxy-acid dehydratase.